A 315-amino-acid polypeptide reads, in one-letter code: tRNA dimethylallyltransferase (315 aa).

Residue 10–17 participates in ATP binding; it reads GPTAVGKT. 12–17 contributes to the substrate binding site; the sequence is TAVGKT. The interval 35 to 38 is interaction with substrate tRNA; it reads DSMQ.

Belongs to the IPP transferase family. In terms of assembly, monomer. It depends on Mg(2+) as a cofactor.

The enzyme catalyses adenosine(37) in tRNA + dimethylallyl diphosphate = N(6)-dimethylallyladenosine(37) in tRNA + diphosphate. Catalyzes the transfer of a dimethylallyl group onto the adenine at position 37 in tRNAs that read codons beginning with uridine, leading to the formation of N6-(dimethylallyl)adenosine (i(6)A). This is tRNA dimethylallyltransferase from Geobacillus kaustophilus (strain HTA426).